We begin with the raw amino-acid sequence, 1384 residues long: Hepatocyte growth factor receptor (1384 aa).

The N-terminal stretch at 1 to 24 (MKAPAVLAPGILVLLFTFVQKSNG) is a signal peptide. The Extracellular portion of the chain corresponds to 25 to 933 (ECKEALVKSR…VIVQPDQNFT (909 aa)). In terms of domain architecture, Sema spans 27–516 (KEALVKSRMN…TGKKITKIPL (490 aa)). N-linked (GlcNAc...) asparagine glycosylation occurs at asparagine 45. Disulfide bonds link cysteine 95–cysteine 101, cysteine 98–cysteine 160, cysteine 133–cysteine 141, and cysteine 173–cysteine 176. N-linked (GlcNAc...) asparagine glycosylation occurs at asparagine 106. Asparagine 149 carries an N-linked (GlcNAc...) asparagine glycan. N-linked (GlcNAc...) asparagine glycosylation is found at asparagine 203 and asparagine 359. 2 cysteine pairs are disulfide-bonded: cysteine 299-cysteine 364 and cysteine 386-cysteine 398. N-linked (GlcNAc...) asparagine glycosylation is found at asparagine 400 and asparagine 406. Intrachain disulfides connect cysteine 521–cysteine 539, cysteine 527–cysteine 562, cysteine 530–cysteine 546, and cysteine 542–cysteine 552. IPT/TIG domains follow at residues 564-656 (PTIY…FSYV), 658-740 (PIIT…FIYR), and 743-837 (PIVY…LIYV). Threonine 583 is a glycosylation site (O-linked (Man) threonine). Asparagine 608 and asparagine 636 each carry an N-linked (GlcNAc...) asparagine glycan. O-linked (Man) threonine glycosylation is found at threonine 677 and threonine 762. 3 N-linked (GlcNAc...) asparagine glycosylation sites follow: asparagine 786, asparagine 880, and asparagine 931. The helical transmembrane segment at 934-956 (GLIVGVVSISIILLLLLGLFLWL) threads the bilayer. Topologically, residues 957–1384 (KKRKQIKDLG…NVSGEDDDDT (428 aa)) are cytoplasmic. The residue at position 967 (serine 967) is a Phosphoserine. Position 978 is a phosphothreonine (threonine 978). A phosphoserine mark is found at serine 991, serine 998, and serine 1001. Residue tyrosine 1004 is modified to Phosphotyrosine. Residues 1079–1346 (VHFNEVIGRG…RISVIFSTFI (268 aa)) form the Protein kinase domain. Residues 1085–1093 (IGRGHFGCV) and lysine 1111 each bind ATP. Aspartate 1205 (proton acceptor) is an active-site residue. The segment at 1213–1382 (LDEKFTVKVA…QDNVSGEDDD (170 aa)) is interaction with RANBP9. Residue tyrosine 1231 is modified to Phosphotyrosine. 2 positions are modified to phosphotyrosine; by autocatalysis: tyrosine 1235 and tyrosine 1236. Threonine 1290 is subject to Phosphothreonine. The tract at residues 1321 to 1360 (WHPKAELRPSFSELVSRISVIFSTFIGEHYVHVNATYVNV) is interaction with MUC20. Tyrosine 1350 and tyrosine 1357 each carry phosphotyrosine; by autocatalysis. Phosphotyrosine is present on tyrosine 1366.

Belongs to the protein kinase superfamily. Tyr protein kinase family. In terms of assembly, heterodimer made of an alpha chain (50 kDa) and a beta chain (145 kDa) which are disulfide linked. Binds PLXNB1. Interacts when phosphorylated with downstream effectors including STAT3, PIK3R1, SRC, PCLG1, GRB2 and GAB1. Interacts with SPSB1, SPSB2 and SPSB4. Interacts with INPP5D/SHIP1. When phosphorylated at Tyr-1357, interacts with INPPL1/SHIP2. Interacts with RANBP9 and RANBP10, as well as SPSB1, SPSB2, SPSB3 and SPSB4. SPSB1 binding occurs in the presence and in the absence of HGF, however HGF treatment has a positive effect on this interaction. Interacts with MUC20; prevents interaction with GRB2 and suppresses hepatocyte growth factor-induced cell proliferation. Interacts with GRB10. Interacts with PTPN1 and PTPN2. Interacts with HSP90AA1 and HSP90AB1; the interaction suppresses MET kinase activity. Interacts with tensin TNS3. Interacts (when phosphorylated) with tensin TNS4 (via SH2 domain); the interaction increases MET protein stability by inhibiting MET endocytosis and subsequent lysosomal degradation. Autophosphorylated in response to ligand binding on Tyr-1235 and Tyr-1236 in the kinase domain leading to further phosphorylation of Tyr-1350 and Tyr-1357 in the C-terminal multifunctional docking site. Dephosphorylated by PTPRJ at Tyr-1350 and Tyr-1366. Dephosphorylated by PTPN1 and PTPN2. Post-translationally, ubiquitinated. Ubiquitination by CBL regulates the receptor stability and activity through proteasomal degradation. In terms of processing, O-mannosylation of IPT/TIG domains by TMEM260 is required for protein maturation. O-mannosylated residues are composed of single mannose glycans that are not elongated or modified. Expressed in many tissues, including liver, lung, heart, spleen and mammary gland.

Its subcellular location is the membrane. The enzyme catalyses L-tyrosyl-[protein] + ATP = O-phospho-L-tyrosyl-[protein] + ADP + H(+). With respect to regulation, in its inactive state, the C-terminal tail interacts with the catalytic domain and inhibits the kinase activity. Upon ligand binding, the C-terminal tail is displaced and becomes phosphorylated, thus increasing the kinase activity. Functionally, receptor tyrosine kinase that transduces signals from the extracellular matrix into the cytoplasm by binding to hepatocyte growth factor/HGF ligand. Regulates many physiological processes including proliferation, scattering, morphogenesis and survival. Ligand binding at the cell surface induces autophosphorylation of MET on its intracellular domain that provides docking sites for downstream signaling molecules. Following activation by ligand, interacts with the PI3-kinase subunit PIK3R1, PLCG1, SRC, GRB2, STAT3 or the adapter GAB1. Recruitment of these downstream effectors by MET leads to the activation of several signaling cascades including the RAS-ERK, PI3 kinase-AKT, or PLCgamma-PKC. The RAS-ERK activation is associated with the morphogenetic effects while PI3K/AKT coordinates prosurvival effects. During embryonic development, MET signaling plays a role in gastrulation, development and migration of muscles and neuronal precursors, angiogenesis and kidney formation. In adults, participates in wound healing as well as organ regeneration and tissue remodeling. Also promotes differentiation and proliferation of hematopoietic cells. This is Hepatocyte growth factor receptor (MET) from Bos taurus (Bovine).